The following is a 1006-amino-acid chain: Collagen alpha-2(I) chain (1006 aa).

The disordered stretch occupies residues 1 to 84 (SGGFDFSFLP…GFPGTPGLPG (84 aa)). A 4-hydroxyproline mark is found at proline 10, proline 13, proline 35, and proline 41. Low complexity predominate over residues 28–64 (LMGPRGPPGASGAPGPQGFQGPAGEPGEPGQTGPAGA). Lysine 86 bears the 5-hydroxylysine; alternate mark. O-linked (Gal...) hydroxylysine; alternate glycosylation occurs at lysine 86. The segment at 99 to 1006 (GQPGAAGVKG…FGYEGDFYRA (908 aa)) is disordered. Low complexity-rich tracts occupy residues 142 to 163 (SRGS…SAGP) and 209 to 230 (PGAN…AGAP). A compositionally biased stretch (gly residues) spans 264 to 273 (GESGGKGEPG). The segment covering 274–284 (SAGPQGPPGSS) has biased composition (low complexity). The span at 306 to 315 (GLRGGPGSRG) shows a compositional bias: gly residues. Positions 328-344 (PAGARGASGPAGVRGPS) are enriched in low complexity. Proline 350 and proline 353 each carry 4-hydroxyproline. Residues 379-398 (LPGIDGRPGPIGPAGARGEA) show a composition bias toward low complexity. Positions 447–456 (GVQGGKGEQG) are enriched in gly residues. Composition is skewed to low complexity over residues 503 to 520 (PGES…SRGP) and 532 to 542 (EPGVVGAPGTA). Over residues 543–552 (GPAGSGGLPG) the composition is skewed to gly residues. 2 stretches are compositionally biased toward low complexity: residues 585–615 (AVGA…PRGS) and 622–642 (VGPA…QPGA). Residues 643-652 (KGERGTKGPK) show a composition bias toward basic and acidic residues. The span at 660 to 670 (PTGPVGSAGPA) shows a compositional bias: low complexity. A compositionally biased stretch (gly residues) spans 680-689 (GSRGDGGPPG). The span at 691 to 700 (TGFPGAAGRT) shows a compositional bias: low complexity. The span at 737-746 (GETGAGGPPG) shows a compositional bias: gly residues. 2 stretches are compositionally biased toward low complexity: residues 754 to 781 (SGEP…LGLP) and 789 to 799 (LPGVAGAVGEP). Residues 800–810 (GPLGIGPPGAR) show a composition bias toward gly residues. Over residues 837 to 882 (YAGNPGPVGAAGAPGPHGAVGPAGKHGNRGEPGPVGSAGPVGALGP) the composition is skewed to low complexity. Residues 892 to 903 (RGDKGEAGDKGP) show a composition bias toward basic and acidic residues. A compositionally biased stretch (pro residues) spans 976 to 988 (SGPPGPPGPPGPP).

Belongs to the fibrillar collagen family. In terms of assembly, trimers of one alpha 2(I) and two alpha 1(I) chains. Interacts (via C-terminus) with TMEM131 (via PapD-L domain); the interaction is direct and is involved in assembly and TRAPPIII ER-to-Golgi transport complex-dependent secretion of collagen. In terms of processing, prolines at the third position of the tripeptide repeating unit (G-X-Y) are hydroxylated in some or all of the chains. In terms of tissue distribution, expressed in bones.

It is found in the secreted. The protein localises to the extracellular space. Its subcellular location is the extracellular matrix. In terms of biological role, type I collagen is a member of group I collagen (fibrillar forming collagen). This is Collagen alpha-2(I) chain from Choloepus hoffmanni (Hoffmann's two-fingered sloth).